The chain runs to 76 residues: Conotoxin TxMEKL-011 (76 aa).

Positions 1 to 19 are cleaved as a signal peptide; sequence MEKLTILLLVAAVLMSTQA. A propeptide spanning residues 20 to 45 is cleaved from the precursor; the sequence is LVERAGENRSKENIKFLLKRKRAADR. 3 disulfides stabilise this stretch: Cys-51-Cys-65, Cys-58-Cys-69, and Cys-64-Cys-73.

Belongs to the conotoxin O2 superfamily. Expressed by the venom duct.

The protein resides in the secreted. The chain is Conotoxin TxMEKL-011 from Conus textile (Cloth-of-gold cone).